The chain runs to 123 residues: Ribonuclease P protein component (123 aa).

Belongs to the RnpA family. In terms of assembly, consists of a catalytic RNA component (M1 or rnpB) and a protein subunit.

The enzyme catalyses Endonucleolytic cleavage of RNA, removing 5'-extranucleotides from tRNA precursor.. Its function is as follows. RNaseP catalyzes the removal of the 5'-leader sequence from pre-tRNA to produce the mature 5'-terminus. It can also cleave other RNA substrates such as 4.5S RNA. The protein component plays an auxiliary but essential role in vivo by binding to the 5'-leader sequence and broadening the substrate specificity of the ribozyme. The polypeptide is Ribonuclease P protein component (Streptococcus pneumoniae (strain Hungary19A-6)).